We begin with the raw amino-acid sequence, 227 residues long: Isoprenyl transferase (227 aa).

Aspartate 13 is a catalytic residue. Residue aspartate 13 participates in Mg(2+) binding. Residues 14 to 17, tryptophan 18, arginine 26, histidine 30, and 58 to 60 each bind substrate; these read GNGR and STE. Asparagine 61 functions as the Proton acceptor in the catalytic mechanism. Residues tryptophan 62, arginine 64, arginine 175, and 181-183 each bind substrate; that span reads RLS. Glutamate 194 is a binding site for Mg(2+).

Belongs to the UPP synthase family. Homodimer. Mg(2+) is required as a cofactor.

Its function is as follows. Catalyzes the condensation of isopentenyl diphosphate (IPP) with allylic pyrophosphates generating different type of terpenoids. The sequence is that of Isoprenyl transferase from Treponema denticola (strain ATCC 35405 / DSM 14222 / CIP 103919 / JCM 8153 / KCTC 15104).